Reading from the N-terminus, the 632-residue chain is Lipoma-preferred partner homolog (632 aa).

2 disordered regions span residues 1-118 (MSHP…RSSL) and 135-249 (SSPY…RSYN). Residues 26–40 (THSFGTPSISVSTQQ) show a composition bias toward polar residues. Residues 41–53 (PPKKFAPVVAPKP) are compositionally biased toward low complexity. At Lys109 the chain carries N6-acetyllysine. Phosphoserine occurs at positions 117 and 152. Residues 144–160 (PGSSSSIASPPVSTPVT) show a composition bias toward low complexity. Polar residues-rich tracts occupy residues 172–182 (PLTATKKSATK) and 206–239 (SYST…SSGQ). Tyr241 bears the Phosphotyrosine mark. At Arg246 the chain carries Omega-N-methylarginine. Lys324 is covalently cross-linked (Glycyl lysine isopeptide (Lys-Gly) (interchain with G-Cter in SUMO1)). 3 consecutive LIM zinc-binding domains span residues 434–493 (GRCA…INTL), 494–554 (EQCS…KFAP), and 555–623 (RCSV…RIRV).

It belongs to the zyxin/ajuba family. In terms of assembly, interacts with PDZ domains of SCRIB, with VASP and with ACTN1/alpha-actinin.

It localises to the nucleus. It is found in the cytoplasm. The protein resides in the cell junction. May play a structural role at sites of cell adhesion in maintaining cell shape and motility. In addition to these structural functions, it may also be implicated in signaling events and activation of gene transcription. May be involved in signal transduction from cell adhesion sites to the nucleus allowing successful integration of signals arising from soluble factors and cell-cell adhesion. Also suggested to serve as a scaffold protein upon which distinct protein complexes are assembled in the cytoplasm and in the nucleus. This Rattus norvegicus (Rat) protein is Lipoma-preferred partner homolog (Lpp).